The following is a 207-amino-acid chain: Dephospho-CoA kinase (207 aa).

A DPCK domain is found at 4 to 203; the sequence is VIGLTGGIAS…EEGYIEKPNY (200 aa). Residue 12-17 participates in ATP binding; that stretch reads ASGKST.

It belongs to the CoaE family.

Its subcellular location is the cytoplasm. It catalyses the reaction 3'-dephospho-CoA + ATP = ADP + CoA + H(+). It participates in cofactor biosynthesis; coenzyme A biosynthesis; CoA from (R)-pantothenate: step 5/5. Functionally, catalyzes the phosphorylation of the 3'-hydroxyl group of dephosphocoenzyme A to form coenzyme A. The protein is Dephospho-CoA kinase of Staphylococcus aureus (strain bovine RF122 / ET3-1).